A 3011-amino-acid chain; its full sequence is Chromodomain-helicase-DNA-binding protein 7 (3011 aa).

5 disordered regions span residues 90 to 146 (ISNA…SMWG), 159 to 189 (PYQQ…QHMQ), 202 to 422 (MQQH…GSAG), 502 to 806 (QQLP…VEKI), and 941 to 960 (PEME…SESS). The segment covering 159–168 (PYQQQQQQPQ) has biased composition (low complexity). A compositionally biased stretch (pro residues) spans 169–179 (PTQPPQAPSGP). Residues 203–215 (QQHGQPQQQRMNQ) are compositionally biased toward low complexity. Polar residues-rich tracts occupy residues 216 to 227 (FSQGQEGLNQGN), 241 to 258 (VPQQ…SVQQ), 291 to 347 (QTLN…NQSV), and 374 to 393 (GSLN…QGTY). Positions 502–516 (QQLPSQQQSFQQQMP) are enriched in low complexity. Polar residues-rich tracts occupy residues 576–586 (TQVSGPNTQLV) and 630–641 (DSQNLSRNSVDC). Composition is skewed to basic and acidic residues over residues 655-684 (KKEP…EPKE) and 718-730 (KGKE…DLDK). Residues 747–759 (QKRRSSRQVKRKR) are compositionally biased toward basic residues. A compositionally biased stretch (basic and acidic residues) spans 760-770 (YTEDLEFKISD). Residues 783–795 (SPSNTSQSEQQES) are compositionally biased toward polar residues. Chromo domains lie at 801 to 868 (PVVE…GQNK) and 883 to 948 (VEID…RVER). Positions 981–1155 (LFNWYNTRNC…FSLLHFLEPG (175 aa)) constitute a Helicase ATP-binding domain. Residue 994–1001 (DEMGLGKT) participates in ATP binding. The DEAH box motif lies at 1106–1109 (DEAH). Residues 1295-1465 (LIDKLLPKLK…LSKKEIEDLL (171 aa)) form the Helicase C-terminal domain. Disordered regions lie at residues 1577–1602 (FSDL…SQGY), 1836–1869 (GTDM…KDEI), and 2136–2291 (GTGN…GFYM). Basic and acidic residues predominate over residues 1585–1597 (EEKPSTKPRRPQD). The span at 1845 to 1856 (DGGEFDREDEDP) shows a compositional bias: acidic residues. Positions 1857 to 1867 (EYKPTRTPFKD) are enriched in basic and acidic residues. Positions 2136 to 2145 (GTGNANTVSS) are enriched in polar residues. 2 stretches are compositionally biased toward basic and acidic residues: residues 2166-2207 (QEEK…KQDC) and 2218-2238 (CELK…SEKG). Residues 2239–2253 (SEEDEEEKLDDDDKS) are compositionally biased toward acidic residues. Residues 2403-2433 (RRRRRKIEIEAERAAKRRNLMEMVAQLRESQ) are a coiled coil. Position 2561 is a phosphoserine (S2561). 2 disordered regions span residues 2825–2900 (TTGN…LPTN) and 2946–3011 (GSNE…ENDE). A compositionally biased stretch (basic and acidic residues) spans 2841–2851 (GASKAEEKKNE). Positions 2864–2877 (DTVSATDSANGSVS) are enriched in polar residues. Residues 2878 to 2893 (AATAATTATATTTTTT) show a composition bias toward low complexity. Positions 2948–2964 (NEEKATDKTEGTAFKDE) are enriched in basic and acidic residues. 2 stretches are compositionally biased toward acidic residues: residues 2965–2974 (ENLEGSDAEE) and 2984–3011 (ILED…ENDE).

The protein belongs to the SNF2/RAD54 helicase family. Expressed in the neural epithelium, otic placodes, optic placodes, branchial arches, and the olfactory placodes,.

Its subcellular location is the nucleus. It catalyses the reaction ATP + H2O = ADP + phosphate + H(+). Its function is as follows. ATP-dependent chromatin-remodeling factor, slides nucleosomes along DNA; nucleosome sliding requires ATP.Probable transcription regulator. Maybe involved in the in 45S precursor rRNA production. This chain is Chromodomain-helicase-DNA-binding protein 7 (CHD7), found in Gallus gallus (Chicken).